Reading from the N-terminus, the 184-residue chain is Outer-membrane lipoprotein carrier protein (184 aa).

The first 19 residues, 1-19, serve as a signal peptide directing secretion; that stretch reads MKAFLKILMVLIFVSVAYA.

This sequence belongs to the LolA family. As to quaternary structure, monomer.

It localises to the periplasm. Functionally, participates in the translocation of lipoproteins from the inner membrane to the outer membrane. Only forms a complex with a lipoprotein if the residue after the N-terminal Cys is not an aspartate (The Asp acts as a targeting signal to indicate that the lipoprotein should stay in the inner membrane). The polypeptide is Outer-membrane lipoprotein carrier protein (Helicobacter pylori (strain P12)).